The chain runs to 545 residues: Propane 2-monooxygenase, hydroxylase component large subunit (545 aa).

Residues glutamate 97, glutamate 127, histidine 130, glutamate 192, glutamate 226, and histidine 229 each contribute to the Fe cation site.

The protein belongs to the TmoA/XamoA family. As to quaternary structure, the propane 2-monooxygenase multicomponent enzyme system is composed of an electron transfer component and a monooxygenase component interacting with the effector protein PrmD. The electron transfer component is composed of a reductase (PrmB), and the monooxygenase component is formed by a large subunit (PrmA) and a small subunit (PrmC). Probably requires the presence of the chaperonin-like protein PrmG to ensure a productive folding, resulting of a soluble PrmA, which leads to the active form of PrmABCD. It depends on Fe(2+) as a cofactor.

It catalyses the reaction propane + NADH + O2 + H(+) = propan-2-ol + NAD(+) + H2O. The enzyme catalyses phenol + NADH + O2 + H(+) = hydroquinone + NAD(+) + H2O. Its function is as follows. Component of the propane 2-monooxygenase multicomponent enzyme system which is involved in the degradation of propane via the O2-dependent hydroxylation of propane. Under acetone induction, also able to catalyze the oxidation of phenol to yield hydroquinone. The protein is Propane 2-monooxygenase, hydroxylase component large subunit of Gordonia sp. (strain TY-5).